Here is a 470-residue protein sequence, read N- to C-terminus: Poly(A) polymerase catalytic subunit (470 aa).

Active-site residues include Asp192 and Asp194.

This sequence belongs to the poxviridae poly(A) polymerase catalytic subunit family. As to quaternary structure, heterodimer of a large (catalytic) subunit and a small (regulatory) subunit.

It catalyses the reaction RNA(n) + ATP = RNA(n)-3'-adenine ribonucleotide + diphosphate. Polymerase that creates the 3'-poly(A) tail of mRNA's. This is Poly(A) polymerase catalytic subunit (PAPL) from Deerpox virus (strain Mule deer/United States/W-848-83/1983) (DPV).